The chain runs to 461 residues: Argininosuccinate lyase (461 aa).

It belongs to the lyase 1 family. Argininosuccinate lyase subfamily.

The protein resides in the cytoplasm. The catalysed reaction is 2-(N(omega)-L-arginino)succinate = fumarate + L-arginine. The protein operates within amino-acid biosynthesis; L-arginine biosynthesis; L-arginine from L-ornithine and carbamoyl phosphate: step 3/3. The polypeptide is Argininosuccinate lyase (Bacillus subtilis (strain 168)).